The primary structure comprises 697 residues: U-box domain-containing protein 18 (697 aa).

Residues 23 to 210 (SISIVTLLDS…INRILDHVGI (188 aa)) are U-box N-terminal domain (UND) required for EXO70B1 binding and crucial for the negative regulation of ABA-dependent stomatal movement. The 75-residue stretch at 287 to 361 (LKVEDLLCPI…RKHCKTNGIV (75 aa)) folds into the U-box domain. ARM repeat units follow at residues 420–459 (SFNR…NLSK), 461–500 (VTGK…YLSS), 502–544 (EDYS…GLLM), 546–587 (SDNH…KLAE), 589–631 (PDGT…NLCL), and 657–696 (NGEY…FVHA).

In terms of assembly, interacts with EXO70B1 via its U-box N-terminal domain (UND).

It localises to the endomembrane system. It carries out the reaction S-ubiquitinyl-[E2 ubiquitin-conjugating enzyme]-L-cysteine + [acceptor protein]-L-lysine = [E2 ubiquitin-conjugating enzyme]-L-cysteine + N(6)-ubiquitinyl-[acceptor protein]-L-lysine.. It participates in protein modification; protein ubiquitination. Functionally, functions as an E3 ubiquitin ligase. Mediates EXO70B1 ubiquitination. Involved in the regulation of abscisic acid (ABA)-mediated stomatal movements. This is U-box domain-containing protein 18 from Arabidopsis thaliana (Mouse-ear cress).